Consider the following 460-residue polypeptide: Adenosylhomocysteinase (460 aa).

Positions 83, 158, and 184 each coordinate substrate. 185–187 (TTT) provides a ligand contact to NAD(+). Positions 214 and 218 each coordinate substrate. NAD(+)-binding positions include Asn219, 248-253 (GYGDVG), Glu271, 327-329 (IGH), and Asn373.

It belongs to the adenosylhomocysteinase family. The cofactor is NAD(+).

Its subcellular location is the cytoplasm. The catalysed reaction is S-adenosyl-L-homocysteine + H2O = L-homocysteine + adenosine. Its pathway is amino-acid biosynthesis; L-homocysteine biosynthesis; L-homocysteine from S-adenosyl-L-homocysteine: step 1/1. In terms of biological role, may play a key role in the regulation of the intracellular concentration of adenosylhomocysteine. The sequence is that of Adenosylhomocysteinase from Bdellovibrio bacteriovorus (strain ATCC 15356 / DSM 50701 / NCIMB 9529 / HD100).